A 159-amino-acid chain; its full sequence is Large ribosomal subunit protein bL35c (159 aa).

The transit peptide at 1–86 (MAMASATATL…TSSPSFTVFA (86 aa)) directs the protein to the chloroplast.

Component of the chloroplast large ribosomal subunit (LSU). Mature 70S chloroplast ribosomes of higher plants consist of a small (30S) and a large (50S) subunit. The 30S small subunit contains 1 molecule of ribosomal RNA (16S rRNA) and 24 different proteins. The 50S large subunit contains 3 rRNA molecules (23S, 5S and 4.5S rRNA) and 33 different proteins.

It is found in the plastid. The protein resides in the chloroplast. Functionally, component of the chloroplast ribosome (chloro-ribosome), a dedicated translation machinery responsible for the synthesis of chloroplast genome-encoded proteins, including proteins of the transcription and translation machinery and components of the photosynthetic apparatus. The chain is Large ribosomal subunit protein bL35c (RPL35) from Spinacia oleracea (Spinach).